A 555-amino-acid polypeptide reads, in one-letter code: Dihydroxy-acid dehydratase (555 aa).

Asp78 contacts Mg(2+). Cys119 is a [2Fe-2S] cluster binding site. 2 residues coordinate Mg(2+): Asp120 and Lys121. Residue Lys121 is modified to N6-carboxylysine. Cys195 is a [2Fe-2S] cluster binding site. Glu444 is a binding site for Mg(2+). Residue Ser470 is the Proton acceptor of the active site.

The protein belongs to the IlvD/Edd family. As to quaternary structure, homodimer. [2Fe-2S] cluster serves as cofactor. The cofactor is Mg(2+).

The catalysed reaction is (2R)-2,3-dihydroxy-3-methylbutanoate = 3-methyl-2-oxobutanoate + H2O. The enzyme catalyses (2R,3R)-2,3-dihydroxy-3-methylpentanoate = (S)-3-methyl-2-oxopentanoate + H2O. It participates in amino-acid biosynthesis; L-isoleucine biosynthesis; L-isoleucine from 2-oxobutanoate: step 3/4. Its pathway is amino-acid biosynthesis; L-valine biosynthesis; L-valine from pyruvate: step 3/4. Functions in the biosynthesis of branched-chain amino acids. Catalyzes the dehydration of (2R,3R)-2,3-dihydroxy-3-methylpentanoate (2,3-dihydroxy-3-methylvalerate) into 2-oxo-3-methylpentanoate (2-oxo-3-methylvalerate) and of (2R)-2,3-dihydroxy-3-methylbutanoate (2,3-dihydroxyisovalerate) into 2-oxo-3-methylbutanoate (2-oxoisovalerate), the penultimate precursor to L-isoleucine and L-valine, respectively. The protein is Dihydroxy-acid dehydratase of Dehalococcoides mccartyi (strain ATCC BAA-2266 / KCTC 15142 / 195) (Dehalococcoides ethenogenes (strain 195)).